A 333-amino-acid polypeptide reads, in one-letter code: Glyceraldehyde-3-phosphate dehydrogenase (333 aa).

NAD(+)-binding positions include 11–12 (RI), aspartate 33, arginine 78, and serine 120. Residues 149–151 (SCT), threonine 180, 209–210 (TG), and arginine 232 contribute to the D-glyceraldehyde 3-phosphate site. The Nucleophile role is filled by cysteine 150. At cysteine 150 the chain carries S-nitrosocysteine. Asparagine 314 lines the NAD(+) pocket.

The protein belongs to the glyceraldehyde-3-phosphate dehydrogenase family. As to quaternary structure, homotetramer. S-nitrosylation of Cys-150 leads to translocation to the nucleus.

The protein resides in the cytoplasm. It is found in the cytosol. The protein localises to the cytoskeleton. It localises to the nucleus. It catalyses the reaction D-glyceraldehyde 3-phosphate + phosphate + NAD(+) = (2R)-3-phospho-glyceroyl phosphate + NADH + H(+). The enzyme catalyses S-nitroso-L-cysteinyl-[GAPDH] + L-cysteinyl-[protein] = L-cysteinyl-[GAPDH] + S-nitroso-L-cysteinyl-[protein]. It functions in the pathway carbohydrate degradation; glycolysis; pyruvate from D-glyceraldehyde 3-phosphate: step 1/5. Its function is as follows. Has both glyceraldehyde-3-phosphate dehydrogenase and nitrosylase activities, thereby playing a role in glycolysis and nuclear functions, respectively. Glyceraldehyde-3-phosphate dehydrogenase is a key enzyme in glycolysis that catalyzes the first step of the pathway by converting D-glyceraldehyde 3-phosphate (G3P) into 3-phospho-D-glyceroyl phosphate. Participates in nuclear events including transcription, RNA transport, DNA replication and apoptosis. Nuclear functions are probably due to the nitrosylase activity that mediates cysteine S-nitrosylation of nuclear target proteins such as SIRT1, HDAC2 and PRKDC. This is Glyceraldehyde-3-phosphate dehydrogenase from Danio rerio (Zebrafish).